A 499-amino-acid polypeptide reads, in one-letter code: MGNDRSLALVQGAVGGVLAGIGIAHGGLLWMAPALALLWSACRFPVAASLWGFVAVLLSHRWLLALHPLTWVGVPAPLSVPVAASIWLFCGAAAAVLVGLWAWLGTSIAHLATREAGIRAQLSHALLMASIWGLAEVLLAGSPLFWIGVGGSLLPGDRALAGLARWFGAGGLATLQLLIGWWLWRTALAWRRGVGWRRSLLVGLLCLLLAHGFGWSLLRSSDATAPISVAAWQPAIPTRSKFSEEQQRRLPEALQNALDRADDLDAAWLVAPEGLLPPDAVLLRPAPLPLLSGGFRWLRGQQRSALLVVDRGERQASAFIDKHRLVPLGEWLPALPGGVFRGLSAVGGLQPGAASRLLQWPGPTAAVAICYELSNGAALAQAVADGAQWLLAVANLDPYPLALQRQFIALAQLRSIETARDLLSVANTGPSALVLATGKQQQLLAPFTEGVGLADLHFHQGISGYTRWREAPLIGLMLFAVVGLGLSRVRSWLISLMLC.

The next 6 helical transmembrane spans lie at 17-37, 38-58, 84-104, 131-151, 163-183, and 198-218; these read VLAG…ALAL, LWSA…AVLL, ASIW…WAWL, IWGL…GVGG, LARW…GWWL, and RSLL…WSLL. The region spanning 232 to 458 is the CN hydrolase domain; it reads WQPAIPTRSK…EGVGLADLHF (227 aa). Glu273 (proton acceptor) is an active-site residue. Lys322 is an active-site residue. Cys370 acts as the Nucleophile in catalysis. Residues 474–494 traverse the membrane as a helical segment; sequence IGLMLFAVVGLGLSRVRSWLI.

Belongs to the CN hydrolase family. Apolipoprotein N-acyltransferase subfamily.

It is found in the cell inner membrane. It catalyses the reaction N-terminal S-1,2-diacyl-sn-glyceryl-L-cysteinyl-[lipoprotein] + a glycerophospholipid = N-acyl-S-1,2-diacyl-sn-glyceryl-L-cysteinyl-[lipoprotein] + a 2-acyl-sn-glycero-3-phospholipid + H(+). Its pathway is protein modification; lipoprotein biosynthesis (N-acyl transfer). Functionally, catalyzes the phospholipid dependent N-acylation of the N-terminal cysteine of apolipoprotein, the last step in lipoprotein maturation. This Prochlorococcus marinus (strain MIT 9313) protein is Apolipoprotein N-acyltransferase.